Consider the following 364-residue polypeptide: Protein-glutamate methylesterase/protein-glutamine glutaminase (364 aa).

The Response regulatory domain maps to 5–123 (RVLVVDDTIL…PAANKAALAN (119 aa)). Residue D56 is modified to 4-aspartylphosphate. The CheB-type methylesterase domain maps to 174–364 (EIVVIGISTG…QEIVHTVKLY (191 aa)). Catalysis depends on residues S181, H208, and D306.

This sequence belongs to the CheB family. Post-translationally, phosphorylated by CheA. Phosphorylation of the N-terminal regulatory domain activates the methylesterase activity.

Its subcellular location is the cytoplasm. The enzyme catalyses [protein]-L-glutamate 5-O-methyl ester + H2O = L-glutamyl-[protein] + methanol + H(+). It carries out the reaction L-glutaminyl-[protein] + H2O = L-glutamyl-[protein] + NH4(+). Its function is as follows. Involved in chemotaxis. Part of a chemotaxis signal transduction system that modulates chemotaxis in response to various stimuli. Catalyzes the demethylation of specific methylglutamate residues introduced into the chemoreceptors (methyl-accepting chemotaxis proteins or MCP) by CheR. Also mediates the irreversible deamidation of specific glutamine residues to glutamic acid. The polypeptide is Protein-glutamate methylesterase/protein-glutamine glutaminase (Desulfotalea psychrophila (strain LSv54 / DSM 12343)).